Here is a 158-residue protein sequence, read N- to C-terminus: SsrA-binding protein (158 aa).

The disordered stretch occupies residues 131–158 (GKKTHDKRETEKKRDWNREKARLLRDRG). Basic and acidic residues predominate over residues 136–158 (DKRETEKKRDWNREKARLLRDRG).

It belongs to the SmpB family.

It localises to the cytoplasm. Functionally, required for rescue of stalled ribosomes mediated by trans-translation. Binds to transfer-messenger RNA (tmRNA), required for stable association of tmRNA with ribosomes. tmRNA and SmpB together mimic tRNA shape, replacing the anticodon stem-loop with SmpB. tmRNA is encoded by the ssrA gene; the 2 termini fold to resemble tRNA(Ala) and it encodes a 'tag peptide', a short internal open reading frame. During trans-translation Ala-aminoacylated tmRNA acts like a tRNA, entering the A-site of stalled ribosomes, displacing the stalled mRNA. The ribosome then switches to translate the ORF on the tmRNA; the nascent peptide is terminated with the 'tag peptide' encoded by the tmRNA and targeted for degradation. The ribosome is freed to recommence translation, which seems to be the essential function of trans-translation. The sequence is that of SsrA-binding protein from Brucella ovis (strain ATCC 25840 / 63/290 / NCTC 10512).